We begin with the raw amino-acid sequence, 646 residues long: Pentatricopeptide repeat-containing protein At5g48910 (646 aa).

Residues 1-24 (MNPTQTLFSPGGNSPASSPASHPS) are disordered. A compositionally biased stretch (low complexity) spans 9 to 24 (SPGGNSPASSPASHPS). 11 PPR repeats span residues 54 to 88 (DTLAAAEILRFCATSDLHHRDLDYAHKIFNQMPQR), 89 to 126 (NCFSWNTIIRGFSESDEDKALIAITLFYEMMSDEFVEP), 127 to 161 (NRFTFPSVLKACAKTGKIQEGKQIHGLALKYGFGG), 162 to 197 (DEFVMSNLVRMYVMCGFMKDARVLFYKNIIEKDMVV), 207 to 237 (EIVLWNVMIDGYMRLGDCKAARMLFDKMRQR), 238 to 272 (SVVSWNTMISGYSLNGFFKDAVEVFREMKKGDIRP), 273 to 307 (NYVTLVSVLPAISRLGSLELGEWLHLYAEDSGIRI), 308 to 338 (DDVLGSALIDMYSKCGIIEKAIHVFERLPRE), 339 to 373 (NVITWSAMINGFAIHGQAGDAIDCFCKMRQAGVRP), 374 to 409 (SDVAYINLLTACSHGGLVEEGRRYFSQMVSVDGLEP), and 410 to 440 (RIEHYGCMVDLLGRSGLLDEAEEFILNMPIK). The tract at residues 445-520 (IWKALLGACR…DPGCSLIDID (76 aa)) is type E motif. Positions 521–551 (GVLHEFVVEDDSHPKAKEINSMLVEISDKLR) are type E(+) motif. The type DYW motif stretch occupies residues 552–646 (LAGYRPITTQ…DGSCSCMDYW (95 aa)).

It belongs to the PPR family. PCMP-H subfamily.

This is Pentatricopeptide repeat-containing protein At5g48910 (PCMP-H38) from Arabidopsis thaliana (Mouse-ear cress).